Consider the following 140-residue polypeptide: Lipoprotein MlpD (140 aa).

The N-terminal stretch at 1–17 is a signal peptide; the sequence is MKIINILFCLFLLMLNG. Cys18 carries N-palmitoyl cysteine lipidation. Cys18 carries the S-diacylglycerol cysteine lipid modification. Residues 22–53 form a disordered region; it reads DTNNSQTKSRQKRDLTQKEATQEKPKSKEELL. Over residues 33-53 the composition is skewed to basic and acidic residues; that stretch reads KRDLTQKEATQEKPKSKEELL.

Belongs to the Multicopy lipoprotein (Mlp) family.

The protein localises to the cell outer membrane. In terms of biological role, an outer membrane protein that may participate in pathogenesis. Some human Lyme disease patients have antibodies against this protein. The Mlp proteins probably undergo intragenic recombination, generating new alleles. This chain is Lipoprotein MlpD, found in Borreliella burgdorferi (strain ATCC 35210 / DSM 4680 / CIP 102532 / B31) (Borrelia burgdorferi).